We begin with the raw amino-acid sequence, 532 residues long: Light-independent protochlorophyllide reductase subunit B (532 aa).

Residue Asp36 participates in [4Fe-4S] cluster binding. The Proton donor role is filled by Asp318. Gly453–Met454 contributes to the substrate binding site.

It belongs to the ChlB/BchB/BchZ family. As to quaternary structure, protochlorophyllide reductase is composed of three subunits; ChlL, ChlN and ChlB. Forms a heterotetramer of two ChlB and two ChlN subunits. The cofactor is [4Fe-4S] cluster.

The protein resides in the plastid. It localises to the chloroplast. The catalysed reaction is chlorophyllide a + oxidized 2[4Fe-4S]-[ferredoxin] + 2 ADP + 2 phosphate = protochlorophyllide a + reduced 2[4Fe-4S]-[ferredoxin] + 2 ATP + 2 H2O. It participates in porphyrin-containing compound metabolism; chlorophyll biosynthesis (light-independent). In terms of biological role, component of the dark-operative protochlorophyllide reductase (DPOR) that uses Mg-ATP and reduced ferredoxin to reduce ring D of protochlorophyllide (Pchlide) to form chlorophyllide a (Chlide). This reaction is light-independent. The NB-protein (ChlN-ChlB) is the catalytic component of the complex. The polypeptide is Light-independent protochlorophyllide reductase subunit B (Tetradesmus obliquus (Green alga)).